The following is an 85-amino-acid chain: Large ribosomal subunit protein uL23 (85 aa).

This sequence belongs to the universal ribosomal protein uL23 family. As to quaternary structure, part of the 50S ribosomal subunit. Interacts with protein L29 and weakly with protein L39e.

Binds to a specific region on the 23S rRNA. Located at the polypeptide exit tunnel on the outside of the subunit. This is Large ribosomal subunit protein uL23 from Haloarcula marismortui (strain ATCC 43049 / DSM 3752 / JCM 8966 / VKM B-1809) (Halobacterium marismortui).